A 235-amino-acid polypeptide reads, in one-letter code: MKILVVCSGGLDSVSLADKMAAEHELIGLISFDYGQRHKKELDFAALAAKRLGVPHQIIDMTNIGASLTGSALTDDLDVPDGHYAEETMKITVVPNRNAIMLAIAFGVAAAKKADAVALAVHGGDHFIYPDCRPGFIDAFQIMQAHALEGYADVKLLAPFVTVSKADIVTEGAKYGTPFDQTWSCYKGGARHCGRCGTCVERREAFHLAGVTDPTDYEDPDFWVSATSGFQAREV.

An ATP-binding site is contributed by 7-17 (CSGGLDSVSLA). Positions 185, 193, 196, and 199 each coordinate Zn(2+).

Belongs to the QueC family. Zn(2+) serves as cofactor.

The catalysed reaction is 7-carboxy-7-deazaguanine + NH4(+) + ATP = 7-cyano-7-deazaguanine + ADP + phosphate + H2O + H(+). Its pathway is purine metabolism; 7-cyano-7-deazaguanine biosynthesis. Its function is as follows. Catalyzes the ATP-dependent conversion of 7-carboxy-7-deazaguanine (CDG) to 7-cyano-7-deazaguanine (preQ(0)). The polypeptide is 7-cyano-7-deazaguanine synthase (Allorhizobium ampelinum (strain ATCC BAA-846 / DSM 112012 / S4) (Agrobacterium vitis (strain S4))).